Here is a 406-residue protein sequence, read N- to C-terminus: Arginine biosynthesis bifunctional protein ArgJ (406 aa).

Substrate-binding residues include Thr-152, Lys-179, Thr-190, Glu-277, Asn-401, and Ser-406. Thr-190 serves as the catalytic Nucleophile.

Belongs to the ArgJ family. In terms of assembly, heterotetramer of two alpha and two beta chains.

It is found in the cytoplasm. It catalyses the reaction N(2)-acetyl-L-ornithine + L-glutamate = N-acetyl-L-glutamate + L-ornithine. The catalysed reaction is L-glutamate + acetyl-CoA = N-acetyl-L-glutamate + CoA + H(+). It participates in amino-acid biosynthesis; L-arginine biosynthesis; L-ornithine and N-acetyl-L-glutamate from L-glutamate and N(2)-acetyl-L-ornithine (cyclic): step 1/1. Its pathway is amino-acid biosynthesis; L-arginine biosynthesis; N(2)-acetyl-L-ornithine from L-glutamate: step 1/4. Functionally, catalyzes two activities which are involved in the cyclic version of arginine biosynthesis: the synthesis of N-acetylglutamate from glutamate and acetyl-CoA as the acetyl donor, and of ornithine by transacetylation between N(2)-acetylornithine and glutamate. The sequence is that of Arginine biosynthesis bifunctional protein ArgJ from Neisseria meningitidis serogroup A / serotype 4A (strain DSM 15465 / Z2491).